A 1377-amino-acid polypeptide reads, in one-letter code: DNA-directed RNA polymerase subunit beta' (1377 aa).

Zn(2+)-binding residues include Cys60, Cys62, Cys75, and Cys78. Residues Asp449, Asp451, and Asp453 each contribute to the Mg(2+) site. The Zn(2+) site is built by Cys777, Cys851, Cys858, and Cys861.

This sequence belongs to the RNA polymerase beta' chain family. As to quaternary structure, the RNAP catalytic core consists of 2 alpha, 1 beta, 1 beta' and 1 omega subunit. When a sigma factor is associated with the core the holoenzyme is formed, which can initiate transcription. Mg(2+) is required as a cofactor. It depends on Zn(2+) as a cofactor.

The enzyme catalyses RNA(n) + a ribonucleoside 5'-triphosphate = RNA(n+1) + diphosphate. In terms of biological role, DNA-dependent RNA polymerase catalyzes the transcription of DNA into RNA using the four ribonucleoside triphosphates as substrates. The chain is DNA-directed RNA polymerase subunit beta' from Borrelia hermsii (strain HS1 / DAH).